The following is a 189-amino-acid chain: Transcription factor FapR (189 aa).

This sequence belongs to the FapR family.

Its function is as follows. Transcriptional factor involved in regulation of membrane lipid biosynthesis by repressing genes involved in fatty acid and phospholipid metabolism. This Exiguobacterium sp. (strain ATCC BAA-1283 / AT1b) protein is Transcription factor FapR.